We begin with the raw amino-acid sequence, 168 residues long: Photosystem I assembly protein Ycf3 (168 aa).

TPR repeat units follow at residues 35–68 (AFTY…EIDP), 72–105 (SYIL…NPSL), and 120–153 (GEQA…APSN).

The protein belongs to the Ycf3 family.

The protein resides in the plastid. The protein localises to the chloroplast thylakoid membrane. In terms of biological role, essential for the assembly of the photosystem I (PSI) complex. May act as a chaperone-like factor to guide the assembly of the PSI subunits. This Physcomitrium patens (Spreading-leaved earth moss) protein is Photosystem I assembly protein Ycf3.